Reading from the N-terminus, the 355-residue chain is MSAQGKRLMVMAGGTGGHVFPGLAVAHHLMAQGWQVRWLGTADRMEADLVPKHGIEIDFIRISGLRGKGIKALIAAPLRIFNAWRQARAIMKAYKPDVVLGMGGYVSGPGGLAAWSLGIPVVLHEQNGIAGLTNKWLAKIATKVMQAFPGAFPNAEVVGNPVRTDVLALPLPQQRLAGREGPVRVLVVGGSQGARILNQTMPQVAAKLGDSVTIWHQSGKGSQQSVEQAYAEAGQPQHKVTEFIDDMAAAYAWADVVVCRSGALTVSEIAAAGLPALFVPFQHKDRQQYWNALPLEKAGAAKIIEQPQLSVDAVANTLAGWSRETLLTMAERARAASIPDATERVANEVSRAARA.

Residues 15–17 (TGG), Asn-127, Arg-163, Ser-191, Ile-244, 263–268 (ALTVSE), and Gln-288 contribute to the UDP-N-acetyl-alpha-D-glucosamine site.

Belongs to the glycosyltransferase 28 family. MurG subfamily.

The protein resides in the cell inner membrane. The catalysed reaction is di-trans,octa-cis-undecaprenyl diphospho-N-acetyl-alpha-D-muramoyl-L-alanyl-D-glutamyl-meso-2,6-diaminopimeloyl-D-alanyl-D-alanine + UDP-N-acetyl-alpha-D-glucosamine = di-trans,octa-cis-undecaprenyl diphospho-[N-acetyl-alpha-D-glucosaminyl-(1-&gt;4)]-N-acetyl-alpha-D-muramoyl-L-alanyl-D-glutamyl-meso-2,6-diaminopimeloyl-D-alanyl-D-alanine + UDP + H(+). It participates in cell wall biogenesis; peptidoglycan biosynthesis. Functionally, cell wall formation. Catalyzes the transfer of a GlcNAc subunit on undecaprenyl-pyrophosphoryl-MurNAc-pentapeptide (lipid intermediate I) to form undecaprenyl-pyrophosphoryl-MurNAc-(pentapeptide)GlcNAc (lipid intermediate II). In Escherichia coli O157:H7, this protein is UDP-N-acetylglucosamine--N-acetylmuramyl-(pentapeptide) pyrophosphoryl-undecaprenol N-acetylglucosamine transferase.